A 305-amino-acid polypeptide reads, in one-letter code: NADH-cytochrome b5 reductase 1 (305 aa).

The chain crosses the membrane as a helical span at residues Val-8–Tyr-28. An FAD-binding FR-type domain is found at Asp-44–Ala-156. FAD contacts are provided by residues Asp-136–Asn-166 and Val-175–Leu-210.

This sequence belongs to the flavoprotein pyridine nucleotide cytochrome reductase family. It depends on FAD as a cofactor.

Its subcellular location is the membrane. The catalysed reaction is 2 Fe(III)-[cytochrome b5] + NADH = 2 Fe(II)-[cytochrome b5] + NAD(+) + H(+). In terms of biological role, NADH-cytochrome b5 reductases are involved in desaturation and elongation of fatty acids, cholesterol biosynthesis, drug metabolism, and, in erythrocyte, methemoglobin reduction. The sequence is that of NADH-cytochrome b5 reductase 1 (Cyb5r1) from Rattus norvegicus (Rat).